A 260-amino-acid chain; its full sequence is Neuraminyllactose-binding hemagglutinin (260 aa).

An N-terminal signal peptide occupies residues 1–27 (MRANNHFKDFAWKKCLLGASVVALLVG). C28 is lipidated: N-palmitoyl cysteine. Residue C28 is the site of S-diacylglycerol cysteine attachment. The segment at 134–139 (KRTIQK) is N-acetyl-neuraminyl-alpha(2,3)-lactose binding motif.

It is found in the cell outer membrane. This Helicobacter pylori (Campylobacter pylori) protein is Neuraminyllactose-binding hemagglutinin (hpaA).